Consider the following 453-residue polypeptide: Tubulin alpha-13 chain (453 aa).

Glutamine 11 serves as a coordination point for GTP. At lysine 40 the chain carries N6-acetyllysine. 7 residues coordinate GTP: glutamate 71, serine 140, glycine 144, threonine 145, threonine 179, asparagine 206, and asparagine 228. Position 71 (glutamate 71) interacts with Mg(2+). The active site involves glutamate 254. The disordered stretch occupies residues glutamate 429–glutamine 453. Positions aspartate 431 to glutamine 453 are enriched in acidic residues.

The protein belongs to the tubulin family. Dimer of alpha and beta chains. A typical microtubule is a hollow water-filled tube with an outer diameter of 25 nm and an inner diameter of 15 nM. Alpha-beta heterodimers associate head-to-tail to form protofilaments running lengthwise along the microtubule wall with the beta-tubulin subunit facing the microtubule plus end conferring a structural polarity. Microtubules usually have 13 protofilaments but different protofilament numbers can be found in some organisms and specialized cells. Requires Mg(2+) as cofactor. Post-translationally, acetylation of alpha chains at Lys-40 stabilizes microtubules and affects affinity and processivity of microtubule motors. This modification has a role in multiple cellular functions, ranging from cell motility, cell cycle progression or cell differentiation to intracellular trafficking and signaling.

The protein localises to the cytoplasm. The protein resides in the cytoskeleton. The catalysed reaction is GTP + H2O = GDP + phosphate + H(+). Its function is as follows. Tubulin is the major constituent of microtubules, a cylinder consisting of laterally associated linear protofilaments composed of alpha- and beta-tubulin heterodimers. Microtubules grow by the addition of GTP-tubulin dimers to the microtubule end, where a stabilizing cap forms. Below the cap, tubulin dimers are in GDP-bound state, owing to GTPase activity of alpha-tubulin. This Naegleria pringsheimi (Amoeba) protein is Tubulin alpha-13 chain (TUBA13).